Here is a 179-residue protein sequence, read N- to C-terminus: Ribulose bisphosphate carboxylase small subunit, chloroplastic 2 (179 aa).

A chloroplast-targeting transit peptide spans 1–58 (MASSATMLSSVATAACVAPAQASMVAPFVGLKSASAFPVTQKTVTGLSTLPSNGGRVQ).

It belongs to the RuBisCO small chain family. As to quaternary structure, heterohexadecamer of 8 large and 8 small subunits.

The protein resides in the plastid. The protein localises to the chloroplast. RuBisCO catalyzes two reactions: the carboxylation of D-ribulose 1,5-bisphosphate, the primary event in carbon dioxide fixation, as well as the oxidative fragmentation of the pentose substrate. Both reactions occur simultaneously and in competition at the same active site. Although the small subunit is not catalytic it is essential for maximal activity. This Fritillaria agrestis (Stinkbells) protein is Ribulose bisphosphate carboxylase small subunit, chloroplastic 2.